A 252-amino-acid polypeptide reads, in one-letter code: Zinc finger protein 511 (252 aa).

C2H2-type zinc fingers lie at residues 80-105 (FACQ…HTLH), 107-130 (NVCS…LEWH), and 144-169 (YQCL…VRMH). Positions 177-221 (FDKPKKSRSPASAEAPGDSGERSEGEAMEICSEPVAASPAPAGER) are disordered. At Arg-240 the chain carries Omega-N-methylarginine.

It belongs to the krueppel C2H2-type zinc-finger protein family.

The protein localises to the nucleus. May be involved in transcriptional regulation. The polypeptide is Zinc finger protein 511 (Homo sapiens (Human)).